Reading from the N-terminus, the 466-residue chain is Glutamate decarboxylase (466 aa).

Lysine 277 is subject to N6-(pyridoxal phosphate)lysine.

The protein belongs to the group II decarboxylase family. Pyridoxal 5'-phosphate serves as cofactor.

The catalysed reaction is L-glutamate + H(+) = 4-aminobutanoate + CO2. Converts internalized glutamate to GABA and increases the internal pH. Involved in glutamate-dependent acid resistance. The chain is Glutamate decarboxylase (gadB) from Lactococcus lactis subsp. lactis (strain IL1403) (Streptococcus lactis).